The chain runs to 165 residues: Large ribosomal subunit protein uL22c (165 aa).

Belongs to the universal ribosomal protein uL22 family. Part of the 50S ribosomal subunit.

The protein resides in the plastid. Its subcellular location is the chloroplast. In terms of biological role, this protein binds specifically to 23S rRNA. Its function is as follows. The globular domain of the protein is located near the polypeptide exit tunnel on the outside of the subunit, while an extended beta-hairpin is found that lines the wall of the exit tunnel in the center of the 70S ribosome. This chain is Large ribosomal subunit protein uL22c (rpl22), found in Daucus carota (Wild carrot).